Here is a 441-residue protein sequence, read N- to C-terminus: Protein C-ets-1 (441 aa).

An N6-acetyllysine; alternate mark is found at Lys-8 and Lys-15. Residues Lys-8 and Lys-15 each participate in a glycyl lysine isopeptide (Lys-Gly) (interchain with G-Cter in SUMO2); alternate cross-link. Thr-38 carries the phosphothreonine; by MAPK modification. In terms of domain architecture, PNT spans 51–136 (ATFSGFTKEQ…EHLEILQKED (86 aa)). Residues 130 to 243 (EILQKEDVKP…DNMCMGRTSR (114 aa)) are activation domain; required for transcription activation. A Glycyl lysine isopeptide (Lys-Gly) (interchain with G-Cter in SUMO2) cross-link involves residue Lys-138. Tyr-223 is modified (phosphotyrosine). Lys-227 is covalently cross-linked (Glycyl lysine isopeptide (Lys-Gly) (interchain with G-Cter in SUMO)). Ser-251 and Ser-254 each carry phosphoserine. Thr-265 is modified (phosphothreonine). Residues Ser-267, Ser-270, Ser-282, and Ser-285 each carry the phosphoserine modification. The helix HI-1 stretch occupies residues 304–312 (FKDYVRDRA). Lys-305 is modified (N6-acetyllysine). The segment at 323-330 (AAALAGYT) is helix HI-2. Positions 335–415 (IQLWQFLLEL…AGKRYVYRFV (81 aa)) form a DNA-binding region, ETS. Residues 418-422 (LQSLL) are helix H4. A helix H5 region spans residues 426-432 (PEELHAM).

The protein belongs to the ETS family. As to quaternary structure, binds DNA as a homodimer; homodimerization is required for transcription activation. Interacts with MAF and MAFB. Interacts with PAX5; the interaction alters DNA-binding properties. Interacts with DAXX. Interacts with UBE2I. Interacts with SP100; the interaction is direct and modulates ETS1 transcriptional activity. Sumoylated on Lys-15 and Lys-227, preferentially with SUMO2; which inhibits transcriptional activity. In terms of processing, ubiquitinated; which induces proteasomal degradation. Post-translationally, phosphorylation at Ser-251, Ser-282 and Ser-285 by CaMK2/CaMKII in response to calcium signaling decreases affinity for DNA: an increasing number of phosphoserines causes DNA-binding to become progressively weaker. As to expression, highly expressed within lymphoid cells. Isoforms c-ETS-1A and Ets-1 p27 are both detected in all fetal tissues tested, but vary with tissue type in adult tissues. None is detected in brain or kidney.

The protein resides in the nucleus. It localises to the cytoplasm. Autoinhibited by a module composed of four alpha helices (HI-1, HI-2, H4, and H5) that flank the DNA-binding ETS domain, reducing the affinity for DNA. Phosphorylation by CaMK2/CaMKII in response to calcium signaling decreases affinity for DNA. Transcription factor. Directly controls the expression of cytokine and chemokine genes in a wide variety of different cellular contexts. May control the differentiation, survival and proliferation of lymphoid cells. May also regulate angiogenesis through regulation of expression of genes controlling endothelial cell migration and invasion. Functionally, acts as a dominant-negative for isoform c-ETS-1A. The protein is Protein C-ets-1 (ETS1) of Homo sapiens (Human).